Consider the following 423-residue polypeptide: Mannose-6-phosphate isomerase (423 aa).

Ala2 is modified (N-acetylalanine). Phosphoserine occurs at positions 102 and 108. Zn(2+) is bound by residues Gln110, His112, Glu137, and His276. Arg295 is an active-site residue.

This sequence belongs to the mannose-6-phosphate isomerase type 1 family. Zn(2+) is required as a cofactor.

The protein resides in the cytoplasm. It catalyses the reaction D-mannose 6-phosphate = D-fructose 6-phosphate. Its pathway is nucleotide-sugar biosynthesis; GDP-alpha-D-mannose biosynthesis; alpha-D-mannose 1-phosphate from D-fructose 6-phosphate: step 1/2. Functionally, isomerase that catalyzes the interconversion of fructose-6-P and mannose-6-P and has a critical role in the supply of D-mannose derivatives required for many eukaryotic glycosylation reactions. In Bos taurus (Bovine), this protein is Mannose-6-phosphate isomerase (MPI).